The primary structure comprises 328 residues: V-type sodium ATPase subunit C (328 aa).

Belongs to the V-ATPase V0D/AC39 subunit family.

Involved in ATP-driven sodium extrusion. The chain is V-type sodium ATPase subunit C (ntpC) from Enterococcus hirae (strain ATCC 9790 / DSM 20160 / JCM 8729 / LMG 6399 / NBRC 3181 / NCIMB 6459 / NCDO 1258 / NCTC 12367 / WDCM 00089 / R).